A 118-amino-acid polypeptide reads, in one-letter code: 5-hydroxyisourate hydrolase (118 aa).

Residues H11, R51, and Y115 each contribute to the substrate site.

It belongs to the transthyretin family. 5-hydroxyisourate hydrolase subfamily. In terms of assembly, homotetramer.

It localises to the peroxisome. It catalyses the reaction 5-hydroxyisourate + H2O = 5-hydroxy-2-oxo-4-ureido-2,5-dihydro-1H-imidazole-5-carboxylate + H(+). It participates in purine metabolism; urate degradation; (S)-allantoin from urate: step 2/3. Its function is as follows. Catalyzes the hydrolysis of 5-hydroxyisourate (HIU) to 2-oxo-4-hydroxy-4-carboxy-5-ureidoimidazoline (OHCU). The sequence is that of 5-hydroxyisourate hydrolase (Urah) from Mus musculus (Mouse).